Reading from the N-terminus, the 362-residue chain is Spermidine/putrescine import ATP-binding protein PotA (362 aa).

Residues 4-235 (IKLDHITKQY…PVNDFVARFI (232 aa)) enclose the ABC transporter domain. 37-44 (GPSGSGKT) is an ATP binding site.

This sequence belongs to the ABC transporter superfamily. Spermidine/putrescine importer (TC 3.A.1.11.1) family. The complex is composed of two ATP-binding proteins (PotA), two transmembrane proteins (PotB and PotC) and a solute-binding protein (PotD).

The protein resides in the cell membrane. The catalysed reaction is ATP + H2O + polyamine-[polyamine-binding protein]Side 1 = ADP + phosphate + polyamineSide 2 + [polyamine-binding protein]Side 1.. Its function is as follows. Part of the ABC transporter complex PotABCD involved in spermidine/putrescine import. Responsible for energy coupling to the transport system. This Lactobacillus delbrueckii subsp. bulgaricus (strain ATCC 11842 / DSM 20081 / BCRC 10696 / JCM 1002 / NBRC 13953 / NCIMB 11778 / NCTC 12712 / WDCM 00102 / Lb 14) protein is Spermidine/putrescine import ATP-binding protein PotA.